The following is a 442-amino-acid chain: Mitochondrial inner membrane magnesium transporter MRS2 (442 aa).

A mitochondrion-targeting transit peptide spans 1-15 (MYFRFGKGLQIQLRH). A helical transmembrane segment spans residues 308-328 (LLLFELKVTVYTLGFTVATLV). The YGMN signature appears at 332 to 335 (YGMN). The helical transmembrane segment at 344 to 364 (NWGFASVVGLSVAAAAVVTIT) threads the bilayer.

This sequence belongs to the CorA metal ion transporter (MIT) (TC 1.A.35) family. As to quaternary structure, homopentamer. Forms homooligomers. Interacts with MFM1.

It localises to the mitochondrion inner membrane. In terms of biological role, high-conductance magnesium-selective channel that mediates the influx of magnesium into the mitochondrial matrix. Essential for the splicing of mRNA group II introns in mitochondria by affecting mitochondrial magnesium concentrations, which are critical for group II intron splicing. It also suppresses a variety of mitochondrial intron mutations and its absence may disturb the assembly of mitochondrial membrane complexes. This is Mitochondrial inner membrane magnesium transporter MRS2 (MRS2) from Kluyveromyces lactis (strain ATCC 8585 / CBS 2359 / DSM 70799 / NBRC 1267 / NRRL Y-1140 / WM37) (Yeast).